Reading from the N-terminus, the 144-residue chain is MAKKVVGYIKLQIPAGKANPSPPVGPALGQRGLNIMQFCKEFNAKTQQLEPGMPIPVVITAYADRTFSFITKTPPNTYFLLKAAKISKGSQTVGKSAAVGSVTTAQLREIAETKFKDMNANDIDGAVRMLAGSAKSMGLNVVEG.

This sequence belongs to the universal ribosomal protein uL11 family. In terms of assembly, part of the ribosomal stalk of the 50S ribosomal subunit. Interacts with L10 and the large rRNA to form the base of the stalk. L10 forms an elongated spine to which L12 dimers bind in a sequential fashion forming a multimeric L10(L12)X complex. In terms of processing, one or more lysine residues are methylated.

Forms part of the ribosomal stalk which helps the ribosome interact with GTP-bound translation factors. This is Large ribosomal subunit protein uL11 from Gluconobacter oxydans (strain 621H) (Gluconobacter suboxydans).